A 344-amino-acid polypeptide reads, in one-letter code: Cyclin-G2 (344 aa).

The span at 301-313 (ESESEDSCEDMSC) shows a compositional bias: acidic residues. Positions 301–320 (ESESEDSCEDMSCGEESLSS) are disordered.

The protein belongs to the cyclin family. Cyclin G subfamily. In terms of tissue distribution, high levels in cerebellum, thymus, spleen and prostate. Low levels in skeletal muscle.

Its subcellular location is the cytoplasm. Its function is as follows. May play a role in growth regulation and in negative regulation of cell cycle progression. This is Cyclin-G2 (CCNG2) from Homo sapiens (Human).